The chain runs to 508 residues: Photosystem II CP47 reaction center protein (508 aa).

The next 6 membrane-spanning stretches (helical) occupy residues 21 to 36 (SVHI…WAGS), 101 to 115 (IMLS…IWHW), 140 to 156 (GIHL…FGAF), 203 to 218 (IAAG…FHLS), 237 to 252 (VLSS…AFVV), and 457 to 472 (SFAL…HGAR).

This sequence belongs to the PsbB/PsbC family. PsbB subfamily. PSII is composed of 1 copy each of membrane proteins PsbA, PsbB, PsbC, PsbD, PsbE, PsbF, PsbH, PsbI, PsbJ, PsbK, PsbL, PsbM, PsbT, PsbX, PsbY, PsbZ, Psb30/Ycf12, at least 3 peripheral proteins of the oxygen-evolving complex and a large number of cofactors. It forms dimeric complexes. It depends on Binds multiple chlorophylls. PSII binds additional chlorophylls, carotenoids and specific lipids. as a cofactor.

The protein resides in the plastid. It localises to the chloroplast thylakoid membrane. In terms of biological role, one of the components of the core complex of photosystem II (PSII). It binds chlorophyll and helps catalyze the primary light-induced photochemical processes of PSII. PSII is a light-driven water:plastoquinone oxidoreductase, using light energy to abstract electrons from H(2)O, generating O(2) and a proton gradient subsequently used for ATP formation. The polypeptide is Photosystem II CP47 reaction center protein (Piper cenocladum (Ant piper)).